A 118-amino-acid polypeptide reads, in one-letter code: Ribulose bisphosphate carboxylase small subunit (118 aa).

It belongs to the RuBisCO small chain family. Heterohexadecamer of 8 large and 8 small subunits.

Functionally, ruBisCO catalyzes two reactions: the carboxylation of D-ribulose 1,5-bisphosphate, the primary event in carbon dioxide fixation, as well as the oxidative fragmentation of the pentose substrate. Both reactions occur simultaneously and in competition at the same active site. Although the small subunit is not catalytic it is essential for maximal activity. The polypeptide is Ribulose bisphosphate carboxylase small subunit (Rhodobacter capsulatus (Rhodopseudomonas capsulata)).